Consider the following 127-residue polypeptide: V-type proton ATPase subunit F (127 aa).

This sequence belongs to the V-ATPase F subunit family. V-ATPase is a heteromultimeric enzyme made up of two complexes: the ATP-hydrolytic V1 complex and the proton translocation V0 complex. The V1 complex consists of three catalytic AB heterodimers that form a heterohexamer, three peripheral stalks each consisting of EG heterodimers, one central rotor including subunits D and F, and the regulatory subunits C and H. The proton translocation complex V0 consists of the proton transport subunit a, a ring of proteolipid subunits c9c'', rotary subunit d, subunits e and f, and the accessory subunits VhaAC45 and ATP6AP2.

In terms of biological role, subunit of the V1 complex of vacuolar(H+)-ATPase (V-ATPase), a multisubunit enzyme composed of a peripheral complex (V1) that hydrolyzes ATP and a membrane integral complex (V0) that translocates protons. V-ATPase is responsible for acidifying and maintaining the pH of intracellular compartments and in some cell types, is targeted to the plasma membrane, where it is responsible for acidifying the extracellular environment. This Anopheles gambiae (African malaria mosquito) protein is V-type proton ATPase subunit F (Vha14).